Here is a 438-residue protein sequence, read N- to C-terminus: Enolase (438 aa).

(2R)-2-phosphoglycerate is bound at residue glutamine 164. Residue glutamate 206 is the Proton donor of the active site. Residues aspartate 243, glutamate 289, and aspartate 316 each contribute to the Mg(2+) site. (2R)-2-phosphoglycerate contacts are provided by lysine 341, arginine 370, serine 371, and lysine 392. Lysine 341 functions as the Proton acceptor in the catalytic mechanism.

The protein belongs to the enolase family. Mg(2+) is required as a cofactor.

The protein resides in the cytoplasm. It is found in the secreted. The protein localises to the cell surface. It carries out the reaction (2R)-2-phosphoglycerate = phosphoenolpyruvate + H2O. Its pathway is carbohydrate degradation; glycolysis; pyruvate from D-glyceraldehyde 3-phosphate: step 4/5. In terms of biological role, catalyzes the reversible conversion of 2-phosphoglycerate (2-PG) into phosphoenolpyruvate (PEP). It is essential for the degradation of carbohydrates via glycolysis. The polypeptide is Enolase (Borrelia garinii subsp. bavariensis (strain ATCC BAA-2496 / DSM 23469 / PBi) (Borreliella bavariensis)).